The primary structure comprises 815 residues: Leucine--tRNA ligase (815 aa).

Positions Pro42–His52 match the 'HIGH' region motif. The 'KMSKS' region signature appears at Lys571–Ser575. Lys574 provides a ligand contact to ATP.

Belongs to the class-I aminoacyl-tRNA synthetase family.

It localises to the cytoplasm. The enzyme catalyses tRNA(Leu) + L-leucine + ATP = L-leucyl-tRNA(Leu) + AMP + diphosphate. In Vesicomyosocius okutanii subsp. Calyptogena okutanii (strain HA), this protein is Leucine--tRNA ligase.